Here is a 474-residue protein sequence, read N- to C-terminus: MGRLVVVSNRIAPPDDKKSSAGGLAVGILGALKTAGGLWFGWSGEVGNEDKPLQKVTRGNITWASFNLSEQDHEEYYSQFSNAVLWPAFHYRLDLVKFQRDSWEGYTRVNALLADKLLPLIEEDDILWIHDYHLLPFASELRKRGVNNRIGFFLHIPFPTPEIFTAIPPHEELLEGLCDYDLLGFQTENDRQAFLESVAGKTRLTTHNGKSHQAWGKTFDTEVYPIGIEPDEIAADASGPLPPKLAQLKNELKNVKNIFSVERLDYSKGLPERFQAYERLLEKYPQHHGKIRYTQIAPTSRGEVQAYQDIRHQLETEAGRINGRYGQLGWTPLYYLNQHFERKVLMKVFRYAEVGLVTPLRDGMNLVAKEYVAAQDPKDPGVLVLSQFAGAANELTSALLVNPYDSDDVANALDRALKMPLTERISRHAEMMKVIRENDINHWQETFIRDLKRTTPRSVESNLQKKIATFPKLA.

Arginine 10 is a D-glucose 6-phosphate binding site. UDP-alpha-D-glucose is bound at residue 22–23 (GG). D-glucose 6-phosphate is bound by residues tyrosine 77 and aspartate 131. Residues arginine 263 and lysine 268 each contribute to the UDP-alpha-D-glucose site. Arginine 301 lines the D-glucose 6-phosphate pocket. UDP-alpha-D-glucose-binding positions include phenylalanine 340 and 366–370 (LVAKE).

It belongs to the glycosyltransferase 20 family. In terms of assembly, homotetramer.

It carries out the reaction D-glucose 6-phosphate + UDP-alpha-D-glucose = alpha,alpha-trehalose 6-phosphate + UDP + H(+). It functions in the pathway glycan biosynthesis; trehalose biosynthesis. In terms of biological role, probably involved in the osmoprotection via the biosynthesis of trehalose. Catalyzes the transfer of glucose from UDP-alpha-D-glucose (UDP-Glc) to D-glucose 6-phosphate (Glc-6-P) to form trehalose-6-phosphate. Acts with retention of the anomeric configuration of the UDP-sugar donor. In Enterobacter sp. (strain 638), this protein is Trehalose-6-phosphate synthase.